Reading from the N-terminus, the 410-residue chain is Inositol hexakisphosphate kinase 3 (410 aa).

Residue 211–219 (PCVLDLKMG) coordinates substrate. Residues 333 to 358 (QEPPERAPGSPHPHEAPQAAHGSSPG) are disordered.

It belongs to the inositol phosphokinase (IPK) family. In terms of tissue distribution, detected in brain.

Its subcellular location is the cytoplasm. It catalyses the reaction 1D-myo-inositol hexakisphosphate + ATP = 5-diphospho-1D-myo-inositol 1,2,3,4,6-pentakisphosphate + ADP. The catalysed reaction is 1-diphospho-1D-myo-inositol 2,3,4,5,6-pentakisphosphate + ATP + H(+) = 1,5-bis(diphospho)-1D-myo-inositol 2,3,4,6-tetrakisphosphate + ADP. Its function is as follows. Converts inositol hexakisphosphate (InsP6) to diphosphoinositol pentakisphosphate (InsP7/PP-InsP5). Converts 1,3,4,5,6-pentakisphosphate (InsP5) to PP-InsP4. In Homo sapiens (Human), this protein is Inositol hexakisphosphate kinase 3 (IP6K3).